Consider the following 244-residue polypeptide: Type I iodothyronine deiodinase (244 aa).

Residues 1-12 (MGLSQLGLWLRR) lie on the Extracellular side of the membrane. The helical; Signal-anchor for type III membrane protein transmembrane segment at 13-33 (LWVLFQVALQVAVGKVFLILF) threads the bilayer. Residues 34-244 (PSRVKQHIVA…VRAVLEKLHS (211 aa)) lie on the Cytoplasmic side of the membrane. Residue Sec-121 is part of the active site. A non-standard amino acid (selenocysteine) is located at residue Sec-121.

This sequence belongs to the iodothyronine deiodinase family. In terms of assembly, predominantly monomer. Can form homodimers but homodimerization is not essential for enzyme activity.

Its subcellular location is the cell membrane. It is found in the endoplasmic reticulum membrane. It localises to the basolateral cell membrane. The enzyme catalyses 3,3',5-triiodo-L-thyronine + iodide + A + H(+) = L-thyroxine + AH2. It carries out the reaction 3,3',5'-triiodo-L-thyronine + iodide + A + H(+) = L-thyroxine + AH2. It catalyses the reaction 3,3'-diiodo-L-thyronine + iodide + A + H(+) = 3,3',5'-triiodo-L-thyronine + AH2. The catalysed reaction is 3,3'-diiodo-L-thyronine + iodide + A + H(+) = 3,3',5-triiodo-L-thyronine + AH2. The enzyme catalyses 3'-iodo-L-thyronine + iodide + A + H(+) = 3',5'-diiodo-L-thyronine + AH2. It carries out the reaction 3-iodo-L-thyronine + iodide + A + H(+) = 3,5-diiodo-L-thyronine + AH2. It catalyses the reaction 3-iodo-L-thyronine + iodide + A + H(+) = 3,3'-diiodo-L-thyronine + AH2. The catalysed reaction is 3,3'-diiodothyronamine + iodide + A + H(+) = 3,3',5'-triiodothyronamine + AH2. The enzyme catalyses 3'-iodothyronamine + iodide + A + H(+) = 3',5'-diiodothyronamine + AH2. It carries out the reaction 3-iodothyronamine + iodide + A + H(+) = 3,3'-diiodothyronamine + AH2. It catalyses the reaction 3,3'-diiodothyronamine + iodide + A + H(+) = 3,3',5-triiodothyronamine + AH2. The catalysed reaction is 3-iodothyronamine + iodide + A + H(+) = 3,5-diiodothyronamine + AH2. The enzyme catalyses 3,3'-diiodo-L-thyronine sulfate + iodide + A + H(+) = 3,3',5'-triiodo-L-thyronine sulfate + AH2. It carries out the reaction 3,3',5'-triiodo-L-thyronine sulfate + iodide + A + H(+) = L-thyroxine sulfate + AH2. It catalyses the reaction 3,3'-diiodo-L-thyronine sulfate + iodide + A + H(+) = 3,3',5-triiodo-L-thyronine sulfate + AH2. Functionally, plays a crucial role in the metabolism of thyroid hormones (TH) and has specific roles in TH activation and inactivation by deiodination. Catalyzes the deiodination of L-thyroxine (T4) to 3,5,3'-triiodothyronine (T3) and 3',5'-diiodothyronine (3',5'-T2) to 3'-monoiodothyronine (3'-T1) via outer-ring deiodination (ORD). Catalyzes the deiodination of T4 to 3,3',5'-triiodothyronine (rT3), T3 to 3,3'-diiodothyronine (3,3'-T2), 3,5-diiodothyronine (3,5-T2) to 3-monoiodothyronine (3-T1) and 3,3'-T2 to 3-T1 via inner-ring deiodination (IRD). Catalyzes the deiodination of rT3 to 3,3'-T2 via ORD. Catalyzes the phenolic ring deiodinations of 3,3',5'-triiodothyronamine, 3',5'-diiodothyronamine and 3,3'-diiodothyronamine as well as tyrosyl ring deiodinations of 3,5,3'-triiodothyronamine and 3,5-diiodothyronamine. Catalyzes the deiodination of L-thyroxine sulfate and 3,3',5-triiodo-L-thyronine sulfate via IRD and of 3,3',5'-triiodo-L-thyronine sulfate via ORD. This chain is Type I iodothyronine deiodinase (DIO1), found in Felis catus (Cat).